The sequence spans 301 residues: Nucleosome assembly protein 1;3 (301 aa).

Residues Val15–Glu69 adopt a coiled-coil conformation. Residues Leu36 to Gln51 carry the Nuclear export signal motif. The interval Glu279 to Ala301 is disordered. Ser297 is modified (phosphoserine; by CK2).

Belongs to the nucleosome assembly protein (NAP) family.

The protein resides in the nucleus. It is found in the cytoplasm. Functionally, may modulate chromatin structure by regulation of nucleosome assembly/disassembly. This is Nucleosome assembly protein 1;3 (NAP1;3) from Oryza sativa subsp. indica (Rice).